The sequence spans 150 residues: Arginine repressor (150 aa).

Belongs to the ArgR family.

Its subcellular location is the cytoplasm. Its pathway is amino-acid biosynthesis; L-arginine biosynthesis [regulation]. Functionally, regulates arginine biosynthesis genes. This Carboxydothermus hydrogenoformans (strain ATCC BAA-161 / DSM 6008 / Z-2901) protein is Arginine repressor.